The following is a 333-amino-acid chain: GTPase Obg (333 aa).

Residues 1–159 enclose the Obg domain; it reads MQFIDLAEIH…RHLRLELKLL (159 aa). Residues 160–328 form the OBG-type G domain; sequence AEVGIIGLPN…LLEAVWQELG (169 aa). GTP is bound by residues 166–173, 191–195, 213–216, 280–283, and 309–311; these read GLPNAGKS, FTTLV, DIPG, NKID, and SAV. Positions 173 and 193 each coordinate Mg(2+).

The protein belongs to the TRAFAC class OBG-HflX-like GTPase superfamily. OBG GTPase family. Monomer. It depends on Mg(2+) as a cofactor.

Its subcellular location is the cytoplasm. An essential GTPase which binds GTP, GDP and possibly (p)ppGpp with moderate affinity, with high nucleotide exchange rates and a fairly low GTP hydrolysis rate. Plays a role in control of the cell cycle, stress response, ribosome biogenesis and in those bacteria that undergo differentiation, in morphogenesis control. The chain is GTPase Obg from Thermosynechococcus vestitus (strain NIES-2133 / IAM M-273 / BP-1).